The following is a 320-amino-acid chain: o-succinylbenzoate synthase (320 aa).

K133 acts as the Proton donor in catalysis. Mg(2+) contacts are provided by D161, E190, and D213. The active-site Proton acceptor is K235.

The protein belongs to the mandelate racemase/muconate lactonizing enzyme family. MenC type 1 subfamily. Requires a divalent metal cation as cofactor.

It carries out the reaction (1R,6R)-6-hydroxy-2-succinyl-cyclohexa-2,4-diene-1-carboxylate = 2-succinylbenzoate + H2O. Its pathway is quinol/quinone metabolism; 1,4-dihydroxy-2-naphthoate biosynthesis; 1,4-dihydroxy-2-naphthoate from chorismate: step 4/7. It functions in the pathway quinol/quinone metabolism; menaquinone biosynthesis. Its function is as follows. Converts 2-succinyl-6-hydroxy-2,4-cyclohexadiene-1-carboxylate (SHCHC) to 2-succinylbenzoate (OSB). This Escherichia coli O139:H28 (strain E24377A / ETEC) protein is o-succinylbenzoate synthase.